We begin with the raw amino-acid sequence, 400 residues long: Chalcone synthase 7 (400 aa).

Cys-168 is a catalytic residue.

It belongs to the thiolase-like superfamily. Chalcone/stilbene synthases family.

It catalyses the reaction (E)-4-coumaroyl-CoA + 3 malonyl-CoA + 3 H(+) = 2',4,4',6'-tetrahydroxychalcone + 3 CO2 + 4 CoA. It participates in secondary metabolite biosynthesis; flavonoid biosynthesis. In terms of biological role, the primary product of this enzyme is 4,2',4',6'-tetrahydroxychalcone (also termed naringenin-chalcone or chalcone) which can under specific conditions spontaneously isomerize into naringenin. This Sorghum bicolor (Sorghum) protein is Chalcone synthase 7 (CHS7).